The sequence spans 372 residues: Cytochrome b (372 aa).

4 consecutive transmembrane segments (helical) span residues 25 to 45 (FGSM…FLAV), 69 to 90 (WMMQ…YIHM), 105 to 125 (WLSG…GYVL), and 170 to 190 (FFAL…LHIM). Heme b is bound by residues H75 and H89. Heme b-binding residues include H174 and H188. Residue H193 coordinates a ubiquinone. The next 4 membrane-spanning stretches (helical) occupy residues 218 to 238 (YKDL…ISFL), 280 to 300 (LGGA…PFTH), 312 to 332 (FMQL…WTAT), and 339 to 358 (YTTI…MSNL).

Belongs to the cytochrome b family. As to quaternary structure, the cytochrome bc1 complex contains 3 respiratory subunits (MT-CYB, CYC1 and UQCRFS1), 2 core proteins (UQCRC1 and UQCRC2) and probably 6 low-molecular weight proteins. The cofactor is heme b.

The protein localises to the mitochondrion inner membrane. Its function is as follows. Component of the ubiquinol-cytochrome c reductase complex (complex III or cytochrome b-c1 complex) that is part of the mitochondrial respiratory chain. The b-c1 complex mediates electron transfer from ubiquinol to cytochrome c. Contributes to the generation of a proton gradient across the mitochondrial membrane that is then used for ATP synthesis. In Sanzinia madagascariensis (Madagascar tree boa), this protein is Cytochrome b (MT-CYB).